The primary structure comprises 594 residues: Probable translation initiation factor IF-2 (594 aa).

One can recognise a tr-type G domain in the interval 5–224 (YRAPIVVVVG…LMAGLTQRLV (220 aa)). A G1 region spans residues 14–21 (GHVDVGKT). 14–21 (GHVDVGKT) contacts GTP. The interval 39-43 (MITQH) is G2. The G3 stretch occupies residues 80–83 (DTPG). Residues 80–84 (DTPGH) and 134–137 (NKVD) each bind GTP. The G4 stretch occupies residues 134 to 137 (NKVD). The G5 stretch occupies residues 202 to 204 (SAV).

Belongs to the TRAFAC class translation factor GTPase superfamily. Classic translation factor GTPase family. IF-2 subfamily.

Its function is as follows. Function in general translation initiation by promoting the binding of the formylmethionine-tRNA to ribosomes. Seems to function along with eIF-2. This is Probable translation initiation factor IF-2 from Caldivirga maquilingensis (strain ATCC 700844 / DSM 13496 / JCM 10307 / IC-167).